Reading from the N-terminus, the 169-residue chain is ATP-dependent Clp protease adapter protein CLPS2, chloroplastic (169 aa).

The N-terminal 33 residues, 1–33, are a transit peptide targeting the chloroplast; sequence MLATRCKCNLPSRSFVAPARSVRTRALHVEGRF. The segment at 67–92 is disordered; that stretch reads DAKTDNGNNGSNTDKDKKSPPGGGNY.

It belongs to the ClpS family.

It is found in the plastid. It localises to the chloroplast stroma. Its function is as follows. Small adapter protein that modulate the activity of plastid Clp protease system (CLPC). Probably involved in substrate selection for plastid CLPC. The chain is ATP-dependent Clp protease adapter protein CLPS2, chloroplastic from Chlamydomonas reinhardtii (Chlamydomonas smithii).